We begin with the raw amino-acid sequence, 340 residues long: Nuclear hormone receptor family member nhr-197 (340 aa).

The segment at residues 1–75 is a DNA-binding region (nuclear receptor); sequence MNCVVCSGRA…VGMTLAPLND (75 aa). NR C4-type zinc fingers lie at residues 3 to 23 and 39 to 58; these read CVVC…CFAC and CKRI…CRAC. One can recognise an NR LBD domain in the interval 98-337; the sequence is KNDKNYSHFV…KRIMQDLFSN (240 aa).

This sequence belongs to the nuclear hormone receptor family.

The protein resides in the nucleus. Functionally, orphan nuclear receptor. This Caenorhabditis elegans protein is Nuclear hormone receptor family member nhr-197 (nhr-197).